Reading from the N-terminus, the 509-residue chain is 2-succinyl-5-enolpyruvyl-6-hydroxy-3-cyclohexene-1-carboxylate synthase (509 aa).

The protein belongs to the TPP enzyme family. MenD subfamily. As to quaternary structure, homodimer. Mg(2+) serves as cofactor. Requires Mn(2+) as cofactor. The cofactor is thiamine diphosphate.

The enzyme catalyses isochorismate + 2-oxoglutarate + H(+) = 5-enolpyruvoyl-6-hydroxy-2-succinyl-cyclohex-3-ene-1-carboxylate + CO2. The protein operates within quinol/quinone metabolism; 1,4-dihydroxy-2-naphthoate biosynthesis; 1,4-dihydroxy-2-naphthoate from chorismate: step 2/7. It participates in quinol/quinone metabolism; menaquinone biosynthesis. Functionally, catalyzes the thiamine diphosphate-dependent decarboxylation of 2-oxoglutarate and the subsequent addition of the resulting succinic semialdehyde-thiamine pyrophosphate anion to isochorismate to yield 2-succinyl-5-enolpyruvyl-6-hydroxy-3-cyclohexene-1-carboxylate (SEPHCHC). This is 2-succinyl-5-enolpyruvyl-6-hydroxy-3-cyclohexene-1-carboxylate synthase from Corynebacterium diphtheriae (strain ATCC 700971 / NCTC 13129 / Biotype gravis).